The primary structure comprises 449 residues: Phosphoglucosamine mutase (449 aa).

S100 acts as the Phosphoserine intermediate in catalysis. S100, D240, D242, and D244 together coordinate Mg(2+). Position 100 is a phosphoserine (S100).

This sequence belongs to the phosphohexose mutase family. Mg(2+) serves as cofactor. In terms of processing, activated by phosphorylation.

It catalyses the reaction alpha-D-glucosamine 1-phosphate = D-glucosamine 6-phosphate. Functionally, catalyzes the conversion of glucosamine-6-phosphate to glucosamine-1-phosphate. This chain is Phosphoglucosamine mutase, found in Clostridium novyi (strain NT).